Reading from the N-terminus, the 289-residue chain is Arabinogalactan O-methyltransferase 1 (289 aa).

Residues 12 to 32 (IITGVLLAGLVGGALLFTSFI) form a helical membrane-spanning segment.

It belongs to the methyltransferase superfamily. As to quaternary structure, binds to the translation initiation factors TIF3E1.

It localises to the golgi apparatus membrane. Involved in the methylation of glucuronic acid of different plant cell wall component, but mainly on side chains of arabinogalactans. The sequence is that of Arabinogalactan O-methyltransferase 1 (AGM1) from Arabidopsis thaliana (Mouse-ear cress).